Consider the following 116-residue polypeptide: Orphan antitoxin YagB (116 aa).

It belongs to the CbeA/YafW/YfjZ antitoxin family.

Its function is as follows. Putative antitoxin component of a type IV toxin-antitoxin (TA) system; its cognate toxin is unknown. This is Orphan antitoxin YagB (yagB) from Escherichia coli (strain K12).